We begin with the raw amino-acid sequence, 177 residues long: ATP-dependent protease subunit HslV (177 aa).

Residue threonine 6 is part of the active site. Na(+) is bound by residues alanine 162, cysteine 165, and threonine 168.

Belongs to the peptidase T1B family. HslV subfamily. A double ring-shaped homohexamer of HslV is capped on each side by a ring-shaped HslU homohexamer. The assembly of the HslU/HslV complex is dependent on binding of ATP.

The protein localises to the cytoplasm. It catalyses the reaction ATP-dependent cleavage of peptide bonds with broad specificity.. Allosterically activated by HslU binding. Protease subunit of a proteasome-like degradation complex believed to be a general protein degrading machinery. The polypeptide is ATP-dependent protease subunit HslV (Desulfovibrio desulfuricans (strain ATCC 27774 / DSM 6949 / MB)).